A 103-amino-acid chain; its full sequence is Pyrimidine/purine nucleoside phosphorylase (103 aa).

This sequence belongs to the nucleoside phosphorylase PpnP family.

The catalysed reaction is a purine D-ribonucleoside + phosphate = a purine nucleobase + alpha-D-ribose 1-phosphate. The enzyme catalyses adenosine + phosphate = alpha-D-ribose 1-phosphate + adenine. It carries out the reaction cytidine + phosphate = cytosine + alpha-D-ribose 1-phosphate. It catalyses the reaction guanosine + phosphate = alpha-D-ribose 1-phosphate + guanine. The catalysed reaction is inosine + phosphate = alpha-D-ribose 1-phosphate + hypoxanthine. The enzyme catalyses thymidine + phosphate = 2-deoxy-alpha-D-ribose 1-phosphate + thymine. It carries out the reaction uridine + phosphate = alpha-D-ribose 1-phosphate + uracil. It catalyses the reaction xanthosine + phosphate = alpha-D-ribose 1-phosphate + xanthine. In terms of biological role, catalyzes the phosphorolysis of diverse nucleosides, yielding D-ribose 1-phosphate and the respective free bases. Can use uridine, adenosine, guanosine, cytidine, thymidine, inosine and xanthosine as substrates. Also catalyzes the reverse reactions. The chain is Pyrimidine/purine nucleoside phosphorylase from Dechloromonas aromatica (strain RCB).